The chain runs to 462 residues: U2 small nuclear ribonucleoprotein auxiliary factor 35 kDa subunit-related protein 2 (462 aa).

Over residues 1-13 (METAGATADATAG) the composition is skewed to low complexity. 3 disordered regions span residues 1–22 (META…RKKY), 44–66 (AELA…EEER), and 115–138 (WEEQ…EREE). A Glycyl lysine isopeptide (Lys-Gly) (interchain with G-Cter in SUMO2) cross-link involves residue lysine 49. The segment covering 57–66 (AEEKRLEEER) has biased composition (basic and acidic residues). Residues 170 to 198 (EKDRANCPFYSKTGACRFGDRCSRKHNFP) form a C3H1-type 1 zinc finger. In terms of domain architecture, RRM spans 202–308 (PTLLIKGMFT…RQLQCEFCPV (107 aa)). A C3H1-type 2 zinc finger spans residues 310–337 (RWKMAICGLFEVQQCPRGKHCNFLHVFR). Serine 353 carries the phosphoserine modification. The interval 354 to 462 (PDWTSSSFGK…QPQPQPQSDP (109 aa)) is disordered. Over residues 364 to 379 (NSERRERASHYDEYYG) the composition is skewed to basic and acidic residues. Residue serine 389 is modified to Phosphoserine. The segment covering 392–403 (FYKRNGESDRKS) has biased composition (basic and acidic residues). A compositionally biased stretch (basic residues) spans 404-417 (SSRHRVKKSHRYGM).

Component of the U11/U12 snRNPs that are part of the U12-type spliceosome. Interacts (via RS domain) with SRSF1 and SRSF2. Interacts with U2AF2/U2AF65. Post-translationally, phosphorylated in the RS domain by SRPK1.

It localises to the nucleus. Pre-mRNA-binding protein required for splicing of both U2- and U12-type introns. Selectively interacts with the 3'-splice site of U2- and U12-type pre-mRNAs and promotes different steps in U2 and U12 intron splicing. Recruited to U12 pre-mRNAs in an ATP-dependent manner and is required for assembly of the prespliceosome, a precursor to other spliceosomal complexes. For U2-type introns, it is selectively and specifically required for the second step of splicing. This Mus musculus (Mouse) protein is U2 small nuclear ribonucleoprotein auxiliary factor 35 kDa subunit-related protein 2 (Zrsr2).